An 808-amino-acid polypeptide reads, in one-letter code: Protein Ac66 (808 aa).

The segment covering 132 to 141 has biased composition (pro residues); it reads PFSTPPPTQP. The disordered stretch occupies residues 132 to 151; sequence PFSTPPPTQPPESNVAGVGG.

In terms of assembly, interacts with the putative E3 ligase IE0 and with viral ubiquitin/vUbi.

Its subcellular location is the host nucleus. The protein resides in the host cytoplasm. Functionally, plays an essential role in the efficient egress of nucleocapsids from the host nucleus to the cytoplasm. In Lepidoptera (butterflies and moths), this protein is Protein Ac66 (Ac66).